The chain runs to 431 residues: Metal-binding activator 1 (431 aa).

The copper-fist DNA-binding region spans 1–40; that stretch reads MILIDDIKYACMECVRGHRSSSCKHHERPLLQVRSKGRPG. Zn(2+) is bound by residues cysteine 11, cysteine 14, cysteine 23, and histidine 25.

The protein localises to the nucleus. Functionally, copper ion-sensing transcription factor which activates transcription of the CTR1 copper transporter under low-copper conditions. Promotes filamentous and invasive growth. In Candida albicans (strain SC5314 / ATCC MYA-2876) (Yeast), this protein is Metal-binding activator 1 (MAC1).